The sequence spans 477 residues: UDP-N-acetylmuramate--L-alanine ligase (477 aa).

115-121 is a binding site for ATP; sequence GTHGKTT.

It belongs to the MurCDEF family.

Its subcellular location is the cytoplasm. The catalysed reaction is UDP-N-acetyl-alpha-D-muramate + L-alanine + ATP = UDP-N-acetyl-alpha-D-muramoyl-L-alanine + ADP + phosphate + H(+). The protein operates within cell wall biogenesis; peptidoglycan biosynthesis. Cell wall formation. This Gluconobacter oxydans (strain 621H) (Gluconobacter suboxydans) protein is UDP-N-acetylmuramate--L-alanine ligase.